Here is a 313-residue protein sequence, read N- to C-terminus: 1-phosphofructokinase (313 aa).

Residues 222 to 227 (SMGAKG) and 254 to 255 (GD) each bind ATP. The active-site Proton acceptor is Asp-255.

Belongs to the carbohydrate kinase PfkB family.

It carries out the reaction beta-D-fructose 1-phosphate + ATP = beta-D-fructose 1,6-bisphosphate + ADP + H(+). In terms of biological role, catalyzes the ATP-dependent phosphorylation of fructose-l-phosphate to fructose-l,6-bisphosphate. The protein is 1-phosphofructokinase (fruK) of Haemophilus influenzae (strain ATCC 51907 / DSM 11121 / KW20 / Rd).